The primary structure comprises 361 residues: MSSLPEAKLDILLARHAALENELLSQISAERYVQMTRELSELNPVVEAVKNWRAVKTEIAGIDAMIADPATDAEMRAMAEAERPALGARGDELAQKIRVALLPKDAMDERNVMLEIRAGTGGDEASLFAGDLFRMYERFAGLQGWKVEAISASEGTMGGYKEIVAEVRGRGAYAKLKFESGVHRVQRVPDTETQGRVHTSAATVAVLPEAEEVDVDIKTDDLRIETMRAQGAGGQHVNKTESAIRITHIPTGIVVMMQDSRSQHKNRASAMNILRSRIYDAERQRINAARSADRKDQVGSGDRSERIRTYNFPQGRVTDHRINLTLYKLPQVIAGDALHELIDALTTEHQAAQLATEGGGA.

Gln-235 is modified (N5-methylglutamine). Positions 288–307 (AARSADRKDQVGSGDRSERI) are disordered.

It belongs to the prokaryotic/mitochondrial release factor family. In terms of processing, methylated by PrmC. Methylation increases the termination efficiency of RF1.

It is found in the cytoplasm. Peptide chain release factor 1 directs the termination of translation in response to the peptide chain termination codons UAG and UAA. The sequence is that of Peptide chain release factor 1 from Nitrobacter hamburgensis (strain DSM 10229 / NCIMB 13809 / X14).